Reading from the N-terminus, the 1109-residue chain is RNA2 polyprotein (1109 aa).

This sequence belongs to the nepoviruses RNA2 polyprotein family. Specific enzymatic cleavages in vivo by the P1 encoded 3C-like protease yield mature proteins.

The protein resides in the host cell junction. It localises to the host plasmodesma. Its subcellular location is the host cytoplasm. The protein localises to the host nucleus. It is found in the virion. In terms of biological role, implicated in RNA2 replication. Could also be required for nematode transmission of the virus. Transports viral genome to neighboring plant cells directly through plasmosdesmata, without any budding. The movement protein allows efficient cell to cell propagation, by bypassing the host cell wall barrier. Acts by forming a tubular structure at the host plasmodesmata, enlarging it enough to allow free passage of virion capsids. This chain is RNA2 polyprotein, found in Vitis rupestris (Grape).